Reading from the N-terminus, the 315-residue chain is Fe(3+)-citrate-binding protein YfmC (315 aa).

An N-terminal signal peptide occupies residues 1–18; it reads MRTYSNKLIAIMSVLLLA. Residue C19 is the site of N-palmitoyl cysteine attachment. C19 carries S-diacylglycerol cysteine lipidation. Positions 27–36 are enriched in low complexity; it reads SSQNNNGSGK. Residues 27-52 are disordered; that stretch reads SSQNNNGSGKSESKDSRVIHDEEGKT. Over residues 37–51 the composition is skewed to basic and acidic residues; the sequence is SESKDSRVIHDEEGK. The 256-residue stretch at 60–315 folds into the Fe/B12 periplasmic-binding domain; that stretch reads RVVVLELSFL…KDVLKKVYNK (256 aa).

The protein belongs to the bacterial solute-binding protein 8 family. In terms of assembly, the complex is composed of one ATP-binding protein (YfmF), two transmembrane proteins (YfmD and YfmE) and a solute-binding protein (YfmC).

The protein resides in the cell membrane. In terms of biological role, part of the ABC transporter complex YfmCDEF involved in citrate-dependent Fe(3+) import. Binds citrate-dependent Fe(3+) and delivers it to the surface of YfmDE. The chain is Fe(3+)-citrate-binding protein YfmC (yfmC) from Bacillus subtilis (strain 168).